A 239-amino-acid chain; its full sequence is Proteasome subunit beta type-6 (239 aa).

Residue Ala2 is modified to N-acetylalanine. Positions 2 to 34 (AATLLAARGAGPAPAWGPEAFTPDWESREVSTG) are cleaved as a propeptide — removed in mature form. Thr35 (nucleophile) is an active-site residue. Position 69 is a phosphothreonine (Thr69).

It belongs to the peptidase T1B family. As to quaternary structure, the 26S proteasome consists of a 20S proteasome core and two 19S regulatory subunits. The 20S proteasome core is a barrel-shaped complex made of 28 subunits that are arranged in four stacked rings. The two outer rings are each formed by seven alpha subunits, and the two inner rings are formed by seven beta subunits. The proteolytic activity is exerted by three beta-subunits PSMB5, PSMB6 and PSMB7. (Microbial infection) Interacts with HIV-1 protein Tat.

It localises to the cytoplasm. Its subcellular location is the nucleus. The enzyme catalyses Cleavage of peptide bonds with very broad specificity.. Component of the 20S core proteasome complex involved in the proteolytic degradation of most intracellular proteins. This complex plays numerous essential roles within the cell by associating with different regulatory particles. Associated with two 19S regulatory particles, forms the 26S proteasome and thus participates in the ATP-dependent degradation of ubiquitinated proteins. The 26S proteasome plays a key role in the maintenance of protein homeostasis by removing misfolded or damaged proteins that could impair cellular functions, and by removing proteins whose functions are no longer required. Associated with the PA200 or PA28, the 20S proteasome mediates ubiquitin-independent protein degradation. This type of proteolysis is required in several pathways including spermatogenesis (20S-PA200 complex) or generation of a subset of MHC class I-presented antigenic peptides (20S-PA28 complex). Within the 20S core complex, PSMB6 displays a peptidylglutamyl-hydrolizing activity also termed postacidic or caspase-like activity, meaning that the peptides bond hydrolysis occurs directly after acidic residues. This chain is Proteasome subunit beta type-6, found in Homo sapiens (Human).